Here is a 704-residue protein sequence, read N- to C-terminus: 1,4-alpha-glucan-branching enzyme (704 aa).

Residues tryptophan 94 and lysine 131 each contribute to the (1,4-alpha-D-glucosyl)n site. Serine 190 bears the Phosphoserine mark. The Nucleophile role is filled by aspartate 356. The active-site Proton donor is the glutamate 417.

This sequence belongs to the glycosyl hydrolase 13 family. GlgB subfamily.

The protein localises to the cytoplasm. The catalysed reaction is Transfers a segment of a (1-&gt;4)-alpha-D-glucan chain to a primary hydroxy group in a similar glucan chain.. It functions in the pathway glycan biosynthesis; glycogen biosynthesis. Functionally, glycogen-branching enzyme participates in the glycogen biosynthetic process along with glycogenin and glycogen synthase. Generates alpha-1,6-glucosidic branches from alpha-1,4-linked glucose chains, to increase solubility of the glycogen polymer. The sequence is that of 1,4-alpha-glucan-branching enzyme (GLC3) from Saccharomyces cerevisiae (strain ATCC 204508 / S288c) (Baker's yeast).